The primary structure comprises 226 residues: 2,3-bisphosphoglycerate-dependent phosphoglycerate mutase (226 aa).

Residues 8–15 (RHGQSVWN), 21–22 (TG), arginine 58, 109–112 (ERMY), lysine 120, 136–137 (RR), and 180–181 (GN) each bind substrate. The active-site Tele-phosphohistidine intermediate is the histidine 9. Glutamate 109 (proton donor/acceptor) is an active-site residue.

Belongs to the phosphoglycerate mutase family. BPG-dependent PGAM subfamily.

The enzyme catalyses (2R)-2-phosphoglycerate = (2R)-3-phosphoglycerate. Its pathway is carbohydrate degradation; glycolysis; pyruvate from D-glyceraldehyde 3-phosphate: step 3/5. In terms of biological role, catalyzes the interconversion of 2-phosphoglycerate and 3-phosphoglycerate. In Chlamydia trachomatis serovar A (strain ATCC VR-571B / DSM 19440 / HAR-13), this protein is 2,3-bisphosphoglycerate-dependent phosphoglycerate mutase.